A 580-amino-acid chain; its full sequence is Tyrosyl-DNA phosphodiesterase 1 (580 aa).

The interval 65–117 is disordered; it reads ATNKEQEAHSSSSKPAVTAPVASGSSSSGSLDTNPSGSSASGPAASQDTSNLA. A compositionally biased stretch (low complexity) spans 87–110; sequence SGSSSSGSLDTNPSGSSASGPAAS. His-248 functions as the Nucleophile in the catalytic mechanism. Substrate is bound at residue Lys-250. The segment at 387 to 390 is interaction with DNA; sequence SIGS. His-479 acts as the Proton donor/acceptor in catalysis. Lys-481 is a substrate binding site.

This sequence belongs to the tyrosyl-DNA phosphodiesterase family. In terms of tissue distribution, expressed in the body and at higher levels in the head. Expressed in the delaminating neuroblasts and a few ganglion mother cells in stage 11-14 embryonic central nervous system. Weak expression is seen in gonads at stage 16. Expressed in the brain; expression is regulated by DIP2.

The protein resides in the nucleus. It localises to the cytoplasm. In terms of biological role, DNA repair enzyme that can remove a variety of covalent adducts from DNA through hydrolysis of a 3'-phosphodiester bond, giving rise to DNA with a free 3' phosphate. Catalyzes the hydrolysis of dead-end complexes between DNA and the topoisomerase I active site tyrosine residue. Hydrolyzes 3'-phosphoglycolates on protruding 3' ends on DNA double-strand breaks due to DNA damage by radiation and free radicals. Acts on blunt-ended double-strand DNA breaks and on single-stranded DNA. May have low 3'exonuclease activity and may be able to remove a single nucleoside from the 3'end of DNA and RNA molecules with 3'hydroxyl groups. Has no exonuclease activity towards DNA or RNA with a 3'phosphate. Required for normal polarization of epidermal cells, correct subcellular location of the Crb complex to the apical lateral membrane, and for normal neuronal development during embryonic development. Contributes to maintenance of epithelial cells in response to topoisomerase-1-mediated and oxidative DNA damage. Required for precise axonal bifurcation in mushroom body neurons. Required for maintenance of normal neuronal function. In Drosophila melanogaster (Fruit fly), this protein is Tyrosyl-DNA phosphodiesterase 1.